The chain runs to 348 residues: Quinone oxidoreductase-like protein 1 (348 aa).

This sequence belongs to the zinc-containing alcohol dehydrogenase family. Quinone oxidoreductase subfamily. As to quaternary structure, component of the FERRY complex composed of five subunits, TBCK, PPP1R21, FERRY3, CRYZL1 and GATD1 with a ratio of 1:2:1:2:4, respectively.

Its subcellular location is the early endosome. Its function is as follows. Component of the FERRY complex (Five-subunit Endosomal Rab5 and RNA/ribosome intermediary). The FERRY complex directly interacts with mRNAs and RAB5A, and functions as a RAB5A effector involved in the localization and the distribution of specific mRNAs most likely by mediating their endosomal transport. The complex recruits mRNAs and ribosomes to early endosomes through direct mRNA-interaction. In Mus musculus (Mouse), this protein is Quinone oxidoreductase-like protein 1 (Cryzl1).